A 531-amino-acid polypeptide reads, in one-letter code: Cytochrome P450 monooxygenase ffsD (531 aa).

The chain crosses the membrane as a helical span at residues 40-60 (VGALLGISLSVVLLLWVISVV). Residue cysteine 475 participates in heme binding.

This sequence belongs to the cytochrome P450 family. Heme serves as cofactor.

It localises to the membrane. It participates in mycotoxin biosynthesis. Its function is as follows. Cytochrome P450 monooxygenase; part of the gene cluster that mediates the biosynthesis of the cytotoxic leucine-containing cytochalasans, including aspochalasin C, aspochalasin E, TMC-169, flavichalasine F, aspergillin PZ, aspochalasin M and flavichalasine G. The first step in the pathway is catalyzed by the hybrid PKS-NRPS ffsA that utilizes 8 units of malonyl-CoA to iteratively assemble the octaketide chain before addition of L-leucine by the C-terminal NRPS modules. Because ffsA lacks a designated enoylreductase (ER) domain, the required activity is provided the enoyl reductase fssC. The methyltransferase (MT) domain of ffsA catalyzes the alpha-methylation at C10 and C14 using S-adenosyl-L-methionine as the methyl-donating cosubstrate. Reduction by the hydrolyase ffsE, followed by dehydration and intra-molecular Diels-Alder cyclization by the Diels-Alderase ffsF then yield the required isoindolone-fused macrocycle. A number of oxidative steps catalyzed by the tailoring cytochrome P450 monooxygenase ffsD, the FAD-linked oxidoreductase ffsJ and the short-chain dehydrogenase/reductase ffsI, are further required to afford the final products. The sequence is that of Cytochrome P450 monooxygenase ffsD from Aspergillus flavipes.